Here is a 131-residue protein sequence, read N- to C-terminus: Chorion class high-cysteine HCB protein 12 (131 aa).

Positions 1–21 (MAAKLIVFVCAIALVAQSVLG) are cleaved as a signal peptide. The left arm stretch occupies residues 22–46 (TGCGCCCRGCGCGCGGCGCGCCENF). The interval 47-110 (RVCSNSAAPT…GNGCVGITRS (64 aa)) is central domain. Positions 111-131 (CGGCGCGCGGCGCGCGGCGCC) are right arm (Gly-rich tandem repeats).

It belongs to the chorion protein family.

Functionally, this protein is one of many from the eggshell of the silk moth. This is Chorion class high-cysteine HCB protein 12 from Bombyx mori (Silk moth).